The following is a 130-amino-acid chain: Small ribosomal subunit protein uS11 (130 aa).

Belongs to the universal ribosomal protein uS11 family. In terms of assembly, part of the 30S ribosomal subunit. Interacts with proteins S7 and S18. Binds to IF-3.

Located on the platform of the 30S subunit, it bridges several disparate RNA helices of the 16S rRNA. Forms part of the Shine-Dalgarno cleft in the 70S ribosome. This Lactobacillus helveticus (strain DPC 4571) protein is Small ribosomal subunit protein uS11.